Reading from the N-terminus, the 338-residue chain is Ornithine carbamoyltransferase (338 aa).

Serine 2 carries the N-acetylserine modification. Carbamoyl phosphate-binding positions include 67–70 (STRT), arginine 118, histidine 145, and glutamine 148. The L-ornithine site is built by asparagine 185, aspartate 249, serine 253, and methionine 254. Catalysis depends on cysteine 289, which acts as the Proton acceptor. Carbamoyl phosphate-binding positions include 289–290 (CL) and arginine 316.

This sequence belongs to the aspartate/ornithine carbamoyltransferase superfamily. OTCase family. As to quaternary structure, interacts with CAR1.

It is found in the cytoplasm. The catalysed reaction is carbamoyl phosphate + L-ornithine = L-citrulline + phosphate + H(+). It functions in the pathway amino-acid biosynthesis; L-arginine biosynthesis; L-arginine from L-ornithine and carbamoyl phosphate: step 1/3. Its activity is regulated as follows. Forms a stable complex with CAR1 in the presence of ornithine and arginine. In this complex CAR1 retains activity, but ARG3 activity is inhibited. In Saccharomyces cerevisiae (strain ATCC 204508 / S288c) (Baker's yeast), this protein is Ornithine carbamoyltransferase (ARG3).